Here is a 309-residue protein sequence, read N- to C-terminus: Aspartate carbamoyltransferase catalytic subunit (309 aa).

Residues R57 and T58 each contribute to the carbamoyl phosphate site. L-aspartate is bound at residue K86. The carbamoyl phosphate site is built by R107, H135, and Q138. L-aspartate-binding residues include R168 and R228. Positions 267 and 268 each coordinate carbamoyl phosphate.

The protein belongs to the aspartate/ornithine carbamoyltransferase superfamily. ATCase family. In terms of assembly, heterooligomer of catalytic and regulatory chains.

The enzyme catalyses carbamoyl phosphate + L-aspartate = N-carbamoyl-L-aspartate + phosphate + H(+). The protein operates within pyrimidine metabolism; UMP biosynthesis via de novo pathway; (S)-dihydroorotate from bicarbonate: step 2/3. Its function is as follows. Catalyzes the condensation of carbamoyl phosphate and aspartate to form carbamoyl aspartate and inorganic phosphate, the committed step in the de novo pyrimidine nucleotide biosynthesis pathway. This is Aspartate carbamoyltransferase catalytic subunit from Cenarchaeum symbiosum (strain A).